The sequence spans 275 residues: 3-methyl-2-oxobutanoate hydroxymethyltransferase (275 aa).

The Mg(2+) site is built by aspartate 49 and aspartate 88. 3-methyl-2-oxobutanoate contacts are provided by residues 49–50 (DS), aspartate 88, and lysine 118. Glutamate 120 contributes to the Mg(2+) binding site. Glutamate 187 (proton acceptor) is an active-site residue.

The protein belongs to the PanB family. Homodecamer; pentamer of dimers. Mg(2+) serves as cofactor.

The protein resides in the cytoplasm. It catalyses the reaction 3-methyl-2-oxobutanoate + (6R)-5,10-methylene-5,6,7,8-tetrahydrofolate + H2O = 2-dehydropantoate + (6S)-5,6,7,8-tetrahydrofolate. It functions in the pathway cofactor biosynthesis; (R)-pantothenate biosynthesis; (R)-pantoate from 3-methyl-2-oxobutanoate: step 1/2. Catalyzes the reversible reaction in which hydroxymethyl group from 5,10-methylenetetrahydrofolate is transferred onto alpha-ketoisovalerate to form ketopantoate. This chain is 3-methyl-2-oxobutanoate hydroxymethyltransferase, found in Bartonella quintana (strain Toulouse) (Rochalimaea quintana).